We begin with the raw amino-acid sequence, 2375 residues long: CCR4-NOT transcription complex subunit 1 (2375 aa).

3 consecutive short sequence motifs (LXXLL) follow at residues 153 to 157 (LPDLL), 181 to 185 (LHLLL), and 223 to 227 (LAPLL). Serine 318 bears the Phosphoserine mark. The short motif at 570–574 (LSMLL) is the LXXLL element. Residues 725–770 (SAAPHTQSMQGFPPNLGSAFSTPQSPAKAFPPLSTPNQTTAFSGIG) form a disordered region. The tract at residues 799-1014 (NNDPFVQRKL…QGSITTPGSI (216 aa)) is interaction with ZFP36. Serine 1060 bears the Phosphoserine mark. Residues 1089–1604 (EPPENIQEKI…AQPMKQAWAT (516 aa)) are interaction with CNOT6, CNOT6L, CNOT7 and CNOT8. Basic and acidic residues predominate over residues 1314-1326 (QLSAPKKDVKQPE). Residues 1314-1351 (QLSAPKKDVKQPEELPAITTTTTSTTPATSTTCTATVP) are disordered. Positions 1332 to 1349 (TTTTTSTTPATSTTCTAT) are enriched in low complexity. Short sequence motifs (LXXLL) lie at residues 1638–1642 (LRSLL), 1941–1945 (LIALL), and 2095–2099 (LRVLL).

Belongs to the CNOT1 family. Component of the CCR4-NOT complex; distinct complexes seem to exist that differ in the participation of probably mutually exclusive catalytic subunits. In the complex, interacts directly with CNOT6, CNOT6L, CNOT7 or CNOT8. Interacts in a ligand-dependent fashion with ESR1 and RXRA. Interacts with NANOS2, TOB1 and ZFP36. Interacts with TNRC6A, TNRC6B or TNRC6C; the interactions are direct. Interacts with YTHDF2; the interaction is direct and promotes recruitment of the CCR4-NOT complex to N6-methyladenosine (m6A)-containing mRNAs, leading to their deadenylation and subsequent degradation. Interacts with EIF4ENIF1/4E-T. Interacts in an RNA-independent manner with BICC1 (via KH domains). Interacts with TEX13A; the interaction may inhibit CNOT1 binding to mRNA and subsequently CNOT1-mediated mRNA degradation.

The protein localises to the cytoplasm. It is found in the P-body. Its subcellular location is the nucleus. Functionally, scaffolding component of the CCR4-NOT complex which is one of the major cellular mRNA deadenylases and is linked to various cellular processes including bulk mRNA degradation, miRNA-mediated repression, translational repression during translational initiation and general transcription regulation. Additional complex functions may be a consequence of its influence on mRNA expression. Its scaffolding function implies its interaction with the catalytic complex module and diverse RNA-binding proteins mediating the complex recruitment to selected mRNA 3'UTRs. Involved in degradation of AU-rich element (ARE)-containing mRNAs probably via association with ZFP36. Mediates the recruitment of the CCR4-NOT complex to miRNA targets and to the RISC complex via association with TNRC6A, TNRC6B or TNRC6C. Acts as a transcriptional repressor. Represses the ligand-dependent transcriptional activation by nuclear receptors. Involved in the maintenance of embryonic stem (ES) cell identity; prevents their differentiation towards extraembryonic trophectoderm lineages. Plays a role in rapid sperm motility via mediating timely mRNA turnover. This chain is CCR4-NOT transcription complex subunit 1 (Cnot1), found in Mus musculus (Mouse).